We begin with the raw amino-acid sequence, 256 residues long: Flap endonuclease Xni (256 aa).

Asp105 provides a ligand contact to Mg(2+). One can recognise a 5'-3' exonuclease domain in the interval 163 to 256; sequence RSQLIDYLAL…QFRIKKPDSE (94 aa). Residues Leu172, Ala173, Pro181, Val183, and Ile186 each contribute to the K(+) site. Residues 185–190 are interaction with DNA; that stretch reads GIGPKS.

It belongs to the Xni family. Requires Mg(2+) as cofactor. K(+) is required as a cofactor.

In terms of biological role, has flap endonuclease activity. During DNA replication, flap endonucleases cleave the 5'-overhanging flap structure that is generated by displacement synthesis when DNA polymerase encounters the 5'-end of a downstream Okazaki fragment. The sequence is that of Flap endonuclease Xni from Shewanella pealeana (strain ATCC 700345 / ANG-SQ1).